The chain runs to 119 residues: Large ribosomal subunit protein bL20 (119 aa).

It belongs to the bacterial ribosomal protein bL20 family.

Binds directly to 23S ribosomal RNA and is necessary for the in vitro assembly process of the 50S ribosomal subunit. It is not involved in the protein synthesizing functions of that subunit. The protein is Large ribosomal subunit protein bL20 of Bordetella bronchiseptica (strain ATCC BAA-588 / NCTC 13252 / RB50) (Alcaligenes bronchisepticus).